We begin with the raw amino-acid sequence, 360 residues long: MKTERVNVNVNNQPYPIYIGENLLQDKSLLQRHVKGRQVMIVSNETIAAFYLDPLKAIYQDFQCDTFILPDGEQYKTLEYWERILHKLASCNHHRDTTLIALGGGVVGDITGFAAACYQRGVDFIQVPTTLLAQVDASIGGKTAVNHPVGKNLIGAFHQPKAVIIDLNTLNTLPEREFKAGMAEIVKAALIKDEKFFTDLENKMSDLLQRNFIFLQAVIKRAAEIKRDIVNADEKERSGERALLNLGHTFAHAIERLLGYGQWLHGEAVSAGLVLAAQLSHRKNLLDFESLQRICRLLTQISLPIHFPKSINADELLSAMYMDKKVANERLHLILLEDLGHAVVSDQVDDRELKSFLENG.

NAD(+) contacts are provided by residues 71–76 (DGEQYK), 105–109 (GVVGD), 129–130 (TT), Lys142, Lys151, and 169–172 (TLNT). Residues Glu184, His248, and His265 each coordinate Zn(2+).

The protein belongs to the sugar phosphate cyclases superfamily. Dehydroquinate synthase family. It depends on Co(2+) as a cofactor. Zn(2+) serves as cofactor. Requires NAD(+) as cofactor.

It is found in the cytoplasm. It catalyses the reaction 7-phospho-2-dehydro-3-deoxy-D-arabino-heptonate = 3-dehydroquinate + phosphate. It functions in the pathway metabolic intermediate biosynthesis; chorismate biosynthesis; chorismate from D-erythrose 4-phosphate and phosphoenolpyruvate: step 2/7. Its function is as follows. Catalyzes the conversion of 3-deoxy-D-arabino-heptulosonate 7-phosphate (DAHP) to dehydroquinate (DHQ). The protein is 3-dehydroquinate synthase of Coxiella burnetii (strain CbuK_Q154) (Coxiella burnetii (strain Q154)).